Here is an 865-residue protein sequence, read N- to C-terminus: FO synthase (865 aa).

A disordered region spans residues 1 to 21 (MIEGVTELATPNVPPAPPSPS). Radical SAM core domains lie at 76 to 320 (ITYS…LGPD) and 544 to 785 (VTYV…DNIQ). The tract at residues 77–409 (TYSRNVFIPL…PRIGAHVAAL (333 aa)) is cofG-like. [4Fe-4S] cluster is bound by residues cysteine 90, cysteine 94, cysteine 97, cysteine 558, cysteine 562, and cysteine 565. Positions 521–854 (DGAELDAVAA…RERTTVYGRV (334 aa)) are cofH-like.

In the N-terminal section; belongs to the radical SAM superfamily. CofG family. The protein in the C-terminal section; belongs to the radical SAM superfamily. CofH family. [4Fe-4S] cluster serves as cofactor.

The catalysed reaction is 5-amino-6-(D-ribitylamino)uracil + L-tyrosine + S-adenosyl-L-methionine = 5-amino-5-(4-hydroxybenzyl)-6-(D-ribitylimino)-5,6-dihydrouracil + 2-iminoacetate + 5'-deoxyadenosine + L-methionine + H(+). It catalyses the reaction 5-amino-5-(4-hydroxybenzyl)-6-(D-ribitylimino)-5,6-dihydrouracil + S-adenosyl-L-methionine = 7,8-didemethyl-8-hydroxy-5-deazariboflavin + 5'-deoxyadenosine + L-methionine + NH4(+) + H(+). It functions in the pathway cofactor biosynthesis; coenzyme F0 biosynthesis. Its function is as follows. Catalyzes the radical-mediated synthesis of 7,8-didemethyl-8-hydroxy-5-deazariboflavin (FO) from 5-amino-6-(D-ribitylamino)uracil and L-tyrosine. The protein is FO synthase (fbiC) of Nocardia farcinica (strain IFM 10152).